A 335-amino-acid polypeptide reads, in one-letter code: E3 ubiquitin-protein ligase NLA (335 aa).

An SPX domain is found at 1–154; the sequence is MKFCKKYEEY…ESRQGQAFKT (154 aa). Residues 231–280 form an RING-type zinc finger; sequence CSICLDTVFDPISLTCGHIYCYMCACSAASVNVVDGLKTAEATEKCPLCR.

Interacts with UBC8. Interacts with PHT1-1 and PHT1-4. Forms homodimers (via RING domain). Interacts with UBC24/PHO2. Interacts with NPF2.13/NRT1.7. Interacts with NAC92/ORE1. As to expression, high expression in roots and stems, medium in seedlings, flowers, rosette and cauline leaves, and very low in siliques. Detected in cotyledons, hypocotyls, pedicel, receptacle, pistil, sepal, filament of stamen and at the two ends of developing siliques.

Its subcellular location is the nucleus speckle. The protein localises to the nucleus. The protein resides in the cell membrane. It catalyses the reaction S-ubiquitinyl-[E2 ubiquitin-conjugating enzyme]-L-cysteine + [acceptor protein]-L-lysine = [E2 ubiquitin-conjugating enzyme]-L-cysteine + N(6)-ubiquitinyl-[acceptor protein]-L-lysine.. Its pathway is protein modification; protein ubiquitination. E3 ubiquitin-protein ligase that mediates E2-dependent protein ubiquitination. Plays a role in salicylic acid-mediated negative feedback regulation of salicylic acid (SA) accumulation. May be involved in the overall regulation of SA, benzoic acid and phenylpropanoid biosynthesis. Involved in defense response. May act as negative regulator of resistance to the necrotrophic fungal pathogen Plectosphaerella cucumerina by modulating the accumulation of the phytoalexin camalexin and the salicylic acid- and jasmonate- dependent defense pathways. Controls the adaptability to nitrogen limitation by channeling the phenylpropanoid metabolic flux to the induced anthocyanin synthesis. Involved in the regulation of inorganic phosphate (Pi) homeostasis in a nitrate-dependent fashion. Directs the ubiquitination and subsequent degradation of the plasma membrane-localized inorganic phosphate transporters PHT1-1 and PHT1-4, to maintain phosphate homeostasis. The ubiquitination of PHTs triggers their clathrin-dependent endocytosis and trafficking to the vacuole through the endosomal pathway for degradation. Functions cooperatively with UBC24/PHO2 to regulate the abundance of PHT1-1, PHT1-2 and PHT1-3 in different subcellular compartments. Regulates Pi homeostasis by mediating, cooperatively with UBC24/PHO2, polyubiquitination of PHT1-4 and its targeting for degradation. Directs the polyubiquitination and subsequent degradation of the plasma membrane-localized nitrate transporter NPF2.13/NRT1.7, to help plants to adapt to nitrogen deficiency by regulating the source-to-sink remobilization of nitrate. Regulates leaf senescence during nitrogen deficiency by mediating, cooperatively with UBC24/PHO2, polyubiquitination of NAC92/ORE1 and its targeting for degradation. The sequence is that of E3 ubiquitin-protein ligase NLA from Arabidopsis thaliana (Mouse-ear cress).